Consider the following 517-residue polypeptide: Sterol 14-alpha demethylase CYP51C (517 aa).

A helical transmembrane segment spans residues 10 to 30; it reads TLPLSVSIPLTTSIIIILSIV. Residue Y115 participates in lanosterol binding. G300 provides a ligand contact to itraconazole. C458 is a binding site for heme.

The protein belongs to the cytochrome P450 family. The cofactor is heme.

Its subcellular location is the endoplasmic reticulum membrane. Its pathway is steroid metabolism; ergosterol biosynthesis. In terms of biological role, together with cyp51A and cyp51B, encodes the sterol 14alpha-demethylase that plays a critical role in the third module of ergosterol biosynthesis pathway, being ergosterol the major sterol component in fungal membranes that participates in a variety of functions. Cyp51C does not seem to encode an active sterol 14-alpha-demethylase, but can impact indirectly on sterol 14alpha-demethylation, and is required for full virulence on host wheat ears, but not on Arabidopsis floral tissue or the fruits of apple and tomato. The third module or late pathway involves the ergosterol synthesis itself through consecutive reactions that mainly occur in the endoplasmic reticulum (ER) membrane. In filamentous fungi, during the initial step of this module, lanosterol (lanosta-8,24-dien-3beta-ol) can be metabolized to eburicol. Sterol 14alpha-demethylase catalyzes the three-step oxidative removal of the 14alpha-methyl group (C-32) of both these sterols in the form of formate, and converts eburicol and lanosterol to 14-demethyleburicol (4,4,24-trimethylergosta-8,14,24(28)-trienol) and 4,4-dimethyl-5alpha-cholesta-8,14,24-trien-3beta-ol, respectively, which are further metabolized by other enzymes in the pathway to ergosterol. This chain is Sterol 14-alpha demethylase CYP51C, found in Gibberella zeae (strain ATCC MYA-4620 / CBS 123657 / FGSC 9075 / NRRL 31084 / PH-1) (Wheat head blight fungus).